Reading from the N-terminus, the 587-residue chain is NADH-quinone oxidoreductase subunit C/D (587 aa).

The tract at residues 1–178 (MAAPTTEHAE…EPFSLPDDVQ (178 aa)) is NADH dehydrogenase I subunit C. Positions 202 to 587 (DFLFLNLGPN…IDFVMADVDR (386 aa)) are NADH dehydrogenase I subunit D.

This sequence in the N-terminal section; belongs to the complex I 30 kDa subunit family. The protein in the C-terminal section; belongs to the complex I 49 kDa subunit family. In terms of assembly, NDH-1 is composed of 13 different subunits. Subunits NuoB, CD, E, F, and G constitute the peripheral sector of the complex.

The protein resides in the cell inner membrane. The catalysed reaction is a quinone + NADH + 5 H(+)(in) = a quinol + NAD(+) + 4 H(+)(out). Functionally, NDH-1 shuttles electrons from NADH, via FMN and iron-sulfur (Fe-S) centers, to quinones in the respiratory chain. The immediate electron acceptor for the enzyme in this species is believed to be ubiquinone. Couples the redox reaction to proton translocation (for every two electrons transferred, four hydrogen ions are translocated across the cytoplasmic membrane), and thus conserves the redox energy in a proton gradient. The polypeptide is NADH-quinone oxidoreductase subunit C/D (Methylococcus capsulatus (strain ATCC 33009 / NCIMB 11132 / Bath)).